The chain runs to 61 residues: MDPNCSCTTGGSCACAGSCKCKECKCTSCKKCCCSCCPVGCAKCAQGCVCKGSSEKCRCCA.

The tract at residues 1 to 29 (MDPNCSCTTGGSCACAGSCKCKECKCTSC) is beta. The a divalent metal cation site is built by Cys-5, Cys-7, Cys-13, Cys-15, Cys-19, Cys-21, Cys-24, Cys-26, Cys-29, Cys-33, Cys-34, Cys-36, Cys-37, Cys-41, Cys-44, Cys-48, Cys-50, Cys-57, Cys-59, and Cys-60. The segment at 30–61 (KKCCCSCCPVGCAKCAQGCVCKGSSEKCRCCA) is alpha.

This sequence belongs to the metallothionein superfamily. Type 1 family. In terms of assembly, monomer.

Functionally, metallothioneins have a high content of cysteine residues that bind various heavy metals; these proteins are transcriptionally regulated by both heavy metals and glucocorticoids. The chain is Metallothionein-1B (MT1B) from Homo sapiens (Human).